A 377-amino-acid chain; its full sequence is Phytanoyl-CoA hydroxylase-interacting protein-like (377 aa).

One can recognise a Fibronectin type-III domain in the interval 52-161 (VPQNIKISNI…EINEFCTADY (110 aa)).

It belongs to the PHYHIP family.

In terms of biological role, may play a role in the development of the central system. This chain is Phytanoyl-CoA hydroxylase-interacting protein-like (phyhipl), found in Danio rerio (Zebrafish).